A 260-amino-acid chain; its full sequence is Global transcriptional regulator CodY (260 aa).

The interval 1-159 (MPNLLQKTRK…SSTVVGIQLL (159 aa)) is GAF domain. A DNA-binding region (H-T-H motif) is located at residues 207–226 (ASVIADRIGITRSVIVNALR).

Belongs to the CodY family.

The protein resides in the cytoplasm. DNA-binding global transcriptional regulator which is involved in the adaptive response to starvation and acts by directly or indirectly controlling the expression of numerous genes in response to nutrient availability. During rapid exponential growth, CodY is highly active and represses genes whose products allow adaptation to nutrient depletion. The chain is Global transcriptional regulator CodY from Streptococcus equi subsp. zooepidemicus (strain MGCS10565).